The primary structure comprises 233 residues: Cilia- and flagella-associated protein 299 (233 aa).

It localises to the cytoplasm. The protein localises to the nucleus. Its function is as follows. May be involved in spermatogenesis. This Xenopus laevis (African clawed frog) protein is Cilia- and flagella-associated protein 299.